Here is a 325-residue protein sequence, read N- to C-terminus: Aldo-keto reductase family 1 member A1 (325 aa).

A2 is subject to N-acetylalanine. S4 is modified (phosphoserine). NADP(+)-binding positions include 11-20 (GQKMPLIGLG), T21, and W22. S38 is modified (phosphoserine). Position 45 (D45) interacts with NADP(+). The active-site Proton donor is Y50. Position 127 is an N6-acetyllysine; alternate (K127). The residue at position 127 (K127) is an N6-succinyllysine; alternate. Residues S162, N163, S211, L213, S215, S216, K263, S264, V265, T266, R269, and N273 each coordinate NADP(+). S211 carries the post-translational modification Phosphoserine.

The protein belongs to the aldo/keto reductase family. Monomer.

It is found in the cytoplasm. The protein resides in the cytosol. It localises to the apical cell membrane. It catalyses the reaction a primary alcohol + NADP(+) = an aldehyde + NADPH + H(+). It carries out the reaction L-gulonate + NADP(+) = aldehydo-D-glucuronate + NADPH + H(+). The enzyme catalyses L-gulono-1,4-lactone + NADP(+) = D-glucurono-3,6-lactone + NADPH + H(+). The catalysed reaction is allyl alcohol + NADP(+) = acrolein + NADPH + H(+). It catalyses the reaction glycerol + NADP(+) = D-glyceraldehyde + NADPH + H(+). It carries out the reaction glycerol + NADP(+) = L-glyceraldehyde + NADPH + H(+). The enzyme catalyses hydroxyacetone + NADP(+) = methylglyoxal + NADPH + H(+). The catalysed reaction is 3-deoxyfructose + NADP(+) = 3-deoxyglucosone + NADPH + H(+). It catalyses the reaction (R)-mevalonate + NADP(+) = (R)-mevaldate + NADPH + H(+). It carries out the reaction pyridine 3-methanol + NADP(+) = pyridine-3-carbaldehyde + NADPH + H(+). The enzyme catalyses S-nitroso-CoA + NADPH + H(+) = sulfinamide-CoA + NADP(+). The catalysed reaction is S-nitrosoglutathione + NADPH + H(+) = S-(hydroxysulfenamide)glutathione + NADP(+). Its function is as follows. Catalyzes the NADPH-dependent reduction of a wide variety of carbonyl-containing compounds to their corresponding alcohols. Displays enzymatic activity towards endogenous metabolites such as aromatic and aliphatic aldehydes, ketones, monosaccharides and bile acids, with a preference for negatively charged substrates, such as glucuronate and succinic semialdehyde. Plays an important role in ascorbic acid biosynthesis by catalyzing the reduction of D-glucuronic acid and D-glucurono-gamma-lactone. Functions as a detoxifiying enzyme by reducing a range of toxic aldehydes. Reduces methylglyoxal and 3-deoxyglucosone, which are present at elevated levels under hyperglycemic conditions and are cytotoxic. Involved also in the detoxification of lipid-derived aldehydes like acrolein. Plays a role in the activation of procarcinogens, such as polycyclic aromatic hydrocarbon trans-dihydrodiols, and in the metabolism of various xenobiotics and drugs. Also acts as an inhibitor of protein S-nitrosylation by mediating degradation of S-nitroso-coenzyme A (S-nitroso-CoA), a cofactor required to S-nitrosylate proteins. S-nitroso-CoA reductase activity is involved in reprogramming intermediary metabolism in renal proximal tubules, notably by inhibiting protein S-nitrosylation of isoform 2 of PKM (PKM2). Also acts as a S-nitroso-glutathione reductase by catalyzing the NADPH-dependent reduction of S-nitrosoglutathione. Displays no reductase activity towards retinoids. This chain is Aldo-keto reductase family 1 member A1, found in Bos taurus (Bovine).